Here is a 207-residue protein sequence, read N- to C-terminus: dITP/XTP pyrophosphatase (207 aa).

Substrate is bound at residue 8–13 (TNNKNK). The active-site Proton acceptor is the Asp72. Residue Asp72 participates in Mg(2+) binding. Substrate contacts are provided by residues Ser73, 157 to 160 (FGYD), Lys180, and 185 to 186 (HR).

It belongs to the HAM1 NTPase family. Homodimer. Mg(2+) serves as cofactor.

It carries out the reaction XTP + H2O = XMP + diphosphate + H(+). It catalyses the reaction dITP + H2O = dIMP + diphosphate + H(+). The enzyme catalyses ITP + H2O = IMP + diphosphate + H(+). Its function is as follows. Pyrophosphatase that catalyzes the hydrolysis of nucleoside triphosphates to their monophosphate derivatives, with a high preference for the non-canonical purine nucleotides XTP (xanthosine triphosphate), dITP (deoxyinosine triphosphate) and ITP. Seems to function as a house-cleaning enzyme that removes non-canonical purine nucleotides from the nucleotide pool, thus preventing their incorporation into DNA/RNA and avoiding chromosomal lesions. The sequence is that of dITP/XTP pyrophosphatase from Lactobacillus johnsonii (strain CNCM I-12250 / La1 / NCC 533).